A 147-amino-acid chain; its full sequence is SsrA-binding protein (147 aa).

The protein belongs to the SmpB family.

It localises to the cytoplasm. Required for rescue of stalled ribosomes mediated by trans-translation. Binds to transfer-messenger RNA (tmRNA), required for stable association of tmRNA with ribosomes. tmRNA and SmpB together mimic tRNA shape, replacing the anticodon stem-loop with SmpB. tmRNA is encoded by the ssrA gene; the 2 termini fold to resemble tRNA(Ala) and it encodes a 'tag peptide', a short internal open reading frame. During trans-translation Ala-aminoacylated tmRNA acts like a tRNA, entering the A-site of stalled ribosomes, displacing the stalled mRNA. The ribosome then switches to translate the ORF on the tmRNA; the nascent peptide is terminated with the 'tag peptide' encoded by the tmRNA and targeted for degradation. The ribosome is freed to recommence translation, which seems to be the essential function of trans-translation. The polypeptide is SsrA-binding protein (Mycoplasma pneumoniae (strain ATCC 29342 / M129 / Subtype 1) (Mycoplasmoides pneumoniae)).